The sequence spans 628 residues: Carbon monoxide dehydrogenase 1 (628 aa).

Residues Cys-44, Cys-52, Cys-53, Cys-56, Cys-61, and Cys-75 each contribute to the [4Fe-4S] cluster site. Residues His-266, Cys-302, Cys-340, Cys-448, Cys-478, and Cys-519 each coordinate [Ni-4Fe-5S] cluster.

The protein belongs to the Ni-containing carbon monoxide dehydrogenase family. In terms of assembly, homodimer. [4Fe-4S] cluster serves as cofactor. Requires [Ni-4Fe-5S] cluster as cofactor.

It catalyses the reaction CO + 2 oxidized [2Fe-2S]-[ferredoxin] + H2O = 2 reduced [2Fe-2S]-[ferredoxin] + CO2 + 2 H(+). Functionally, CODH oxidizes carbon monoxide coupled, via CooF, to the reduction of a hydrogen cation by a hydrogenase (possibly CooH). The protein is Carbon monoxide dehydrogenase 1 (cooS1) of Methanosarcina mazei (strain ATCC BAA-159 / DSM 3647 / Goe1 / Go1 / JCM 11833 / OCM 88) (Methanosarcina frisia).